The chain runs to 1058 residues: Carbamoyl phosphate synthase large chain (1058 aa).

The carboxyphosphate synthetic domain stretch occupies residues 1–401 (MPKRTDIQKI…SLLKACRSLE (401 aa)). The ATP site is built by R129, R169, G175, G176, R208, I210, E215, G241, I242, H243, Q284, and E298. Residues 133 to 327 (KQLMEELEQP…IAKLAAKIAV (195 aa)) form the ATP-grasp 1 domain. Mg(2+)-binding residues include Q284, E298, and N300. Residues Q284, E298, and N300 each contribute to the Mn(2+) site. The tract at residues 402 to 546 (IGVHHNEIPE…YSTYGWENES (145 aa)) is oligomerization domain. Residues 547 to 929 (IRSDKESVLV…ALYKAFEASY (383 aa)) are carbamoyl phosphate synthetic domain. In terms of domain architecture, ATP-grasp 2 spans 671-861 (EQALKELDIP…MAQVATKLIL (191 aa)). Residues R707, S746, I748, E752, G777, V778, H779, S780, Q820, and E832 each coordinate ATP. 3 residues coordinate Mg(2+): Q820, E832, and N834. Mn(2+) is bound by residues Q820, E832, and N834. One can recognise an MGS-like domain in the interval 930–1058 (LHLPTFGNVV…ESRSFVTEAI (129 aa)). The tract at residues 930–1058 (LHLPTFGNVV…ESRSFVTEAI (129 aa)) is allosteric domain.

The protein belongs to the CarB family. In terms of assembly, composed of two chains; the small (or glutamine) chain promotes the hydrolysis of glutamine to ammonia, which is used by the large (or ammonia) chain to synthesize carbamoyl phosphate. Tetramer of heterodimers (alpha,beta)4. Mg(2+) is required as a cofactor. It depends on Mn(2+) as a cofactor.

It catalyses the reaction hydrogencarbonate + L-glutamine + 2 ATP + H2O = carbamoyl phosphate + L-glutamate + 2 ADP + phosphate + 2 H(+). The enzyme catalyses hydrogencarbonate + NH4(+) + 2 ATP = carbamoyl phosphate + 2 ADP + phosphate + 2 H(+). It functions in the pathway amino-acid biosynthesis; L-arginine biosynthesis; carbamoyl phosphate from bicarbonate: step 1/1. The protein operates within pyrimidine metabolism; UMP biosynthesis via de novo pathway; (S)-dihydroorotate from bicarbonate: step 1/3. Large subunit of the glutamine-dependent carbamoyl phosphate synthetase (CPSase). CPSase catalyzes the formation of carbamoyl phosphate from the ammonia moiety of glutamine, carbonate, and phosphate donated by ATP, constituting the first step of 2 biosynthetic pathways, one leading to arginine and/or urea and the other to pyrimidine nucleotides. The large subunit (synthetase) binds the substrates ammonia (free or transferred from glutamine from the small subunit), hydrogencarbonate and ATP and carries out an ATP-coupled ligase reaction, activating hydrogencarbonate by forming carboxy phosphate which reacts with ammonia to form carbamoyl phosphate. In Streptococcus pneumoniae serotype 2 (strain D39 / NCTC 7466), this protein is Carbamoyl phosphate synthase large chain.